Consider the following 885-residue polypeptide: MGCAPSIHVSQSGVIYCRDSDESSSPRQTTSVSQGPAAPLPGLFVQTDAADAIPPSRASGPPSVARVRRARTELGSGSSAGSAAPAATTSRGRRRHCCSSAEAETQTCYTSVKQVSSAEVRIGPMRLTQDPIQVLLIFAKEDSQSDGFWWACDRAGYRCNIARTPESALECFLDKHHEIIVIDHRQTQNFDAEAVCRSIRATNPSEHTVILAVVSRVSDDHEEASVLPLLHAGFNRRFMENSSIIACYNELIQIEHGEVRSQFKLRACNSVFTALDHCHEAIEITSDDHVIQYVNPAFERMMGYHKGELLGKELADLPKSDKNRADLLDTINTCIKKGKEWQGVYYARRKSGDSIQQHVKITPVIGQGGKIRHFVSLKKLCCTTDNNKQIHKIHRDSGDNSQTEPHSFRYKNRRKESIDVKSISSRGSDAPSLQNRRYPSMARIHSMTIEAPITKVINIINAAQENSPVTVAEALDRVLEILRTTELYSPQLGTKDEDPHTSDLVGGLMTDGLRRLSGNEYVFTKNVHQSHSHLAMPITINDVPPCISQLLDNEESWDFNIFELEAITHKRPLVYLGLKVFSRFGVCEFLNCSETTLRAWFQVIEANYHSSNAYHNSTHAADVLHATAFFLGKERVKGSLDQLDEVAALIAATVHDVDHPGRTNSFLCNAGSELAVLYNDTAVLESHHTALAFQLTVKDTKCNIFKNIDRNHYRTLRQAIIDMVLATEMTKHFEHVNKFVNSINKPMAAEIEGSDCECNPAGKNFPENQILIKRMMIKCADVANPCRPLDLCIEWAGRISEEYFAQTDEEKRQGLPVVMPVFDRNTCSIPKSQISFIDYFITDMFDAWDAFAHLPALMQHLADNYKHWKTLDDLKCKSLRLPSDS.

2 disordered regions span residues 18 to 41 and 72 to 95; these read RDSD…APLP and TELG…GRRR. The segment covering 23–34 has biased composition (polar residues); the sequence is SSSPRQTTSVSQ. Over residues 75–90 the composition is skewed to low complexity; it reads GSGSSAGSAAPAATTS. The 72-residue stretch at 267–338 folds into the PAS domain; sequence ACNSVFTALD…DTINTCIKKG (72 aa). The disordered stretch occupies residues 393 to 436; the sequence is IHRDSGDNSQTEPHSFRYKNRRKESIDVKSISSRGSDAPSLQNR. Residues 422 to 436 show a composition bias toward polar residues; sequence SISSRGSDAPSLQNR. Serine 517 bears the Phosphoserine mark. Residues 539–875 form the PDEase domain; that stretch reads TINDVPPCIS…KHWKTLDDLK (337 aa). The Proton donor role is filled by histidine 615. A divalent metal cation-binding residues include histidine 619, histidine 655, and aspartate 656. Residue serine 754 is modified to Phosphoserine. Residue aspartate 781 participates in a divalent metal cation binding.

Belongs to the cyclic nucleotide phosphodiesterase family. PDE8 subfamily. A divalent metal cation serves as cofactor. In terms of tissue distribution, abundantly expressed in the thyroid. Also very weakly expressed in brain, spinal cord and placenta. In the thyroid isoform 1 predominates, and isoforms 2 and 6 are also highly expressed. In the placenta isoforms 1 and 2 are expressed equally. In the brain isoform 2 predominates.

The enzyme catalyses 3',5'-cyclic AMP + H2O = AMP + H(+). It participates in purine metabolism; 3',5'-cyclic AMP degradation; AMP from 3',5'-cyclic AMP: step 1/1. Inhibited by dipyridimole. Insensitive to selective PDE inhibitors including rolipram and milrinone as well as to the non-selective inhibitor, IBMX. Unaffected by cGMP. Its function is as follows. Hydrolyzes the second messenger cAMP, which is a key regulator of many important physiological processes. May be involved in specific signaling in the thyroid gland. This is High affinity cAMP-specific and IBMX-insensitive 3',5'-cyclic phosphodiesterase 8B (PDE8B) from Homo sapiens (Human).